The following is a 126-amino-acid chain: Large ribosomal subunit protein bL17 (126 aa).

It belongs to the bacterial ribosomal protein bL17 family. In terms of assembly, part of the 50S ribosomal subunit. Contacts protein L32.

The polypeptide is Large ribosomal subunit protein bL17 (Limosilactobacillus fermentum (strain NBRC 3956 / LMG 18251) (Lactobacillus fermentum)).